The sequence spans 178 residues: MLLPNTNWFWYTHENELRLDLGDTLTFVAPFALKNLVNLPSDKQLFSLEDTEHYVALAESLDNSGLELSDGELVQILLNATAALKFHKPIGMKSWLYKTQSTSGVHYQLALLEPTDTAYPELGQVIVIEQDGACATCMLISNEFAVNSSKKFSKFEMIKVMNDRLIPCLVDIPVYKRA.

Belongs to the ZapC family. As to quaternary structure, interacts directly with FtsZ.

The protein localises to the cytoplasm. In terms of biological role, contributes to the efficiency of the cell division process by stabilizing the polymeric form of the cell division protein FtsZ. Acts by promoting interactions between FtsZ protofilaments and suppressing the GTPase activity of FtsZ. This is Cell division protein ZapC from Pseudoalteromonas atlantica (strain T6c / ATCC BAA-1087).